Reading from the N-terminus, the 596-residue chain is Aspartate--tRNA(Asp/Asn) ligase (596 aa).

L-aspartate is bound at residue E175. The tract at residues Q199–K202 is aspartate. Residues R221 and H454 each coordinate L-aspartate. Position 221 to 223 (R221 to E223) interacts with ATP. E488 is a binding site for ATP. Residue R495 participates in L-aspartate binding. Residue G540–R543 participates in ATP binding.

The protein belongs to the class-II aminoacyl-tRNA synthetase family. Type 1 subfamily. In terms of assembly, homodimer.

It is found in the cytoplasm. It catalyses the reaction tRNA(Asx) + L-aspartate + ATP = L-aspartyl-tRNA(Asx) + AMP + diphosphate. Functionally, aspartyl-tRNA synthetase with relaxed tRNA specificity since it is able to aspartylate not only its cognate tRNA(Asp) but also tRNA(Asn). Reaction proceeds in two steps: L-aspartate is first activated by ATP to form Asp-AMP and then transferred to the acceptor end of tRNA(Asp/Asn). The chain is Aspartate--tRNA(Asp/Asn) ligase from Mesorhizobium japonicum (strain LMG 29417 / CECT 9101 / MAFF 303099) (Mesorhizobium loti (strain MAFF 303099)).